The primary structure comprises 710 residues: Zinc finger and BTB domain-containing protein 24 (710 aa).

The 67-residue stretch at 37–103 folds into the BTB domain; sequence CDITLIVENV…IYTGYLHASE (67 aa). Disordered regions lie at residues 134–176 and 202–256; these read APKP…EGRS and EEDS…SRRR. Residues 159 to 171 constitute a DNA-binding region (a.T hook); the sequence is KRKRGRPRKANGL. Basic and acidic residues-rich tracts occupy residues 202 to 219 and 231 to 244; these read EEDS…KESE and PAEK…KAGD. 8 C2H2-type zinc fingers span residues 293-315, 321-343, 349-371, 377-399, 405-427, 433-455, 461-483, and 489-511; these read ARCK…QRRH, FKCN…TRMH, YTCT…MSLH, FTCD…YRVH, PECS…LRTH, FTCE…IRIH, YSCS…CILH, and FSCP…LKIH. The interval 651–676 is disordered; that stretch reads EQTTSSVPAADTGARATPVPSTRPGA.

The protein belongs to the krueppel C2H2-type zinc-finger protein family. In terms of assembly, interacts with MN1. In terms of tissue distribution, widely expressed. Highest level in liver, testis and kidney.

Its subcellular location is the nucleus. Its function is as follows. May be involved in BMP2-induced transcription. The polypeptide is Zinc finger and BTB domain-containing protein 24 (Zbtb24) (Mus musculus (Mouse)).